We begin with the raw amino-acid sequence, 465 residues long: UDP-glycosyltransferase 89A2 (465 aa).

UDP-alpha-D-glucose contacts are provided by residues serine 291, 342 to 344 (VSQ), 359 to 367 (HCGWNSVLE), and 381 to 384 (EADQ).

It belongs to the UDP-glycosyltransferase family.

Its function is as follows. Glucosyltransferase that glucosylates benzoates and benzoate derivatives in vitro. In Arabidopsis thaliana (Mouse-ear cress), this protein is UDP-glycosyltransferase 89A2 (UGT89A2).